Reading from the N-terminus, the 156-residue chain is Small ribosomal subunit protein uS7 (156 aa).

It belongs to the universal ribosomal protein uS7 family. In terms of assembly, part of the 30S ribosomal subunit. Contacts proteins S9 and S11.

One of the primary rRNA binding proteins, it binds directly to 16S rRNA where it nucleates assembly of the head domain of the 30S subunit. Is located at the subunit interface close to the decoding center, probably blocks exit of the E-site tRNA. This chain is Small ribosomal subunit protein uS7, found in Microcystis aeruginosa (strain NIES-843 / IAM M-2473).